Reading from the N-terminus, the 432-residue chain is D-amino acid dehydrogenase (432 aa).

3 to 17 contributes to the FAD binding site; it reads VVILGSGVVGVASAW.

It belongs to the DadA oxidoreductase family. It depends on FAD as a cofactor.

The enzyme catalyses a D-alpha-amino acid + A + H2O = a 2-oxocarboxylate + AH2 + NH4(+). Its pathway is amino-acid degradation; D-alanine degradation; NH(3) and pyruvate from D-alanine: step 1/1. Oxidative deamination of D-amino acids. The chain is D-amino acid dehydrogenase from Escherichia coli O45:K1 (strain S88 / ExPEC).